The chain runs to 166 residues: S-phase kinase-associated protein 1 homolog (166 aa).

The interval 105-166 is interaction with the F-box domain of F-box proteins; it reads ILAANYLDIK…ENKWAEEATS (62 aa).

The protein belongs to the SKP1 family. As to quaternary structure, component of multiple SCF (SKP1-CUL1-F-box) E3 ubiquitin-protein ligase complexes formed of CUL1, SKP1, RBX1 and a variable F-box domain-containing protein as substrate-specific subunit.

Its pathway is protein modification; protein ubiquitination. In terms of biological role, essential component of the SCF (SKP1-CUL1-F-box protein) ubiquitin ligase complex, which mediates the ubiquitination of proteins involved in cell cycle progression, signal transduction and transcription. In the SCF complex, serves as an adapter that links the F-box protein to CUL1. The functional specificity of the SCF complex depends on the F-box protein as substrate recognition component. Its association with the holoenzyme telomerase ribonucleoprotein complex suggests that it may play a role in turnover of holoenzyme telomerase complex components. The sequence is that of S-phase kinase-associated protein 1 homolog from Tetrahymena thermophila (strain SB210).